A 697-amino-acid polypeptide reads, in one-letter code: Portal protein (697 aa).

Residues 633–697 (MSREAAGGVP…RRAGGPYGFH (65 aa)) are disordered. Residues 664 to 689 (ITADEERRGPERVGRFRNGGPDDPRR) show a composition bias toward basic and acidic residues.

Belongs to the herpesviridae portal protein family. As to quaternary structure, homododecamerizes. Interacts with terminase subunits TRM1 and TRM3.

It localises to the virion. The protein localises to the host nucleus. Its function is as follows. Forms a portal in the viral capsid through which viral DNA is translocated during DNA packaging. Assembles as a dodecamer at a single fivefold axe of the T=16 icosahedric capsid. Binds to the molecular motor that translocates the viral DNA, termed terminase. The sequence is that of Portal protein (UL104) from Homo sapiens (Human).